The sequence spans 90 residues: Mu-theraphotoxin-Phlo1b (90 aa).

The signal sequence occupies residues 1-22 (MKVSVLITLAVLGVMFVWTSAA). The propeptide occupies 23-50 (EQEDHGSDRRDSPALLKSLGRVFQSEER). Intrachain disulfides connect Cys52/Cys66, Cys59/Cys71, and Cys65/Cys79. Position 85 is a phenylalanine amide (Phe85). Positions 86-90 (GNEKS) are excised as a propeptide.

Belongs to the neurotoxin 10 (Hwtx-1) family. 39 (Jztx-34) subfamily. In terms of tissue distribution, expressed by the venom gland.

The protein localises to the secreted. Its function is as follows. Gating-modifier toxin that inhibits voltage-gated sodium channel Nav by shifting the threshold for channel activation to more positive potentials. This toxin moderately inhibits human Nav1.7/SCN9A (IC(50)=360 nM) and weakly inhibits hNav1.2/SCN2A (37% inhibition at 1 uM peptide) and hNav1.5/SCN5A (&lt;20% inhibition at 1 uM peptide). Inhibition of Nav1.7 is voltage-dependent, with lower inhibition at more positive test pulses. This is Mu-theraphotoxin-Phlo1b from Phlogius sp. (Tarantula spider).